The following is a 251-amino-acid chain: HTH-type transcriptional regulator IolR (251 aa).

The HTH deoR-type domain maps to Met1 to Ser57. The H-T-H motif DNA-binding region spans Val19–Asp38.

Iol operon repressor. The sequence is that of HTH-type transcriptional regulator IolR (iolR) from Bacillus subtilis (strain 168).